The following is a 660-amino-acid chain: Bifunctional polymyxin resistance protein ArnA (660 aa).

The tract at residues 1 to 304 (MKTVVFAYHD…MLGLVQGSRL (304 aa)) is formyltransferase ArnAFT. 86 to 88 (HLI) is a binding site for (6R)-10-formyltetrahydrofolate. The Proton donor; for formyltransferase activity role is filled by histidine 104. Residues arginine 114 and 136 to 140 (VKRAD) each bind (6R)-10-formyltetrahydrofolate. The tract at residues 314–660 (RRTRVLILGV…RTVDLTDKPS (347 aa)) is dehydrogenase ArnADH. NAD(+) contacts are provided by residues aspartate 347 and 368 to 369 (DI). UDP-alpha-D-glucuronate contacts are provided by residues alanine 393, tyrosine 398, and 432 to 433 (TS). The active-site Proton acceptor; for decarboxylase activity is glutamate 434. Residues arginine 460, asparagine 492, 526–535 (KLIDGGKQKR), and tyrosine 613 contribute to the UDP-alpha-D-glucuronate site. Catalysis depends on arginine 619, which acts as the Proton donor; for decarboxylase activity.

It in the N-terminal section; belongs to the Fmt family. UDP-L-Ara4N formyltransferase subfamily. This sequence in the C-terminal section; belongs to the NAD(P)-dependent epimerase/dehydratase family. UDP-glucuronic acid decarboxylase subfamily. In terms of assembly, homohexamer, formed by a dimer of trimers.

It catalyses the reaction UDP-alpha-D-glucuronate + NAD(+) = UDP-beta-L-threo-pentopyranos-4-ulose + CO2 + NADH. The enzyme catalyses UDP-4-amino-4-deoxy-beta-L-arabinose + (6R)-10-formyltetrahydrofolate = UDP-4-deoxy-4-formamido-beta-L-arabinose + (6S)-5,6,7,8-tetrahydrofolate + H(+). The protein operates within nucleotide-sugar biosynthesis; UDP-4-deoxy-4-formamido-beta-L-arabinose biosynthesis; UDP-4-deoxy-4-formamido-beta-L-arabinose from UDP-alpha-D-glucuronate: step 1/3. Its pathway is nucleotide-sugar biosynthesis; UDP-4-deoxy-4-formamido-beta-L-arabinose biosynthesis; UDP-4-deoxy-4-formamido-beta-L-arabinose from UDP-alpha-D-glucuronate: step 3/3. It participates in bacterial outer membrane biogenesis; lipopolysaccharide biosynthesis. Functionally, bifunctional enzyme that catalyzes the oxidative decarboxylation of UDP-glucuronic acid (UDP-GlcUA) to UDP-4-keto-arabinose (UDP-Ara4O) and the addition of a formyl group to UDP-4-amino-4-deoxy-L-arabinose (UDP-L-Ara4N) to form UDP-L-4-formamido-arabinose (UDP-L-Ara4FN). The modified arabinose is attached to lipid A and is required for resistance to polymyxin and cationic antimicrobial peptides. The protein is Bifunctional polymyxin resistance protein ArnA of Shigella flexneri.